The sequence spans 384 residues: Bifunctional enzyme IspD/IspF (384 aa).

A 2-C-methyl-D-erythritol 4-phosphate cytidylyltransferase region spans residues 1 to 226 (MAKTVVLVVA…RCLFDGPGEV (226 aa)). The interval 227-384 (RSASGYDVHR…QAMASVWLPR (158 aa)) is 2-C-methyl-D-erythritol 2,4-cyclodiphosphate synthase. Residues Asp-233 and His-235 each coordinate a divalent metal cation. 4-CDP-2-C-methyl-D-erythritol 2-phosphate contacts are provided by residues 233 to 235 (DVH) and 260 to 261 (HS). Residue His-268 coordinates a divalent metal cation. 4-CDP-2-C-methyl-D-erythritol 2-phosphate is bound by residues 282-284 (DIG), 358-361 (TTTE), Phe-365, and Arg-368.

The protein in the N-terminal section; belongs to the IspD/TarI cytidylyltransferase family. IspD subfamily. This sequence in the C-terminal section; belongs to the IspF family. It depends on a divalent metal cation as a cofactor.

It catalyses the reaction 2-C-methyl-D-erythritol 4-phosphate + CTP + H(+) = 4-CDP-2-C-methyl-D-erythritol + diphosphate. It carries out the reaction 4-CDP-2-C-methyl-D-erythritol 2-phosphate = 2-C-methyl-D-erythritol 2,4-cyclic diphosphate + CMP. Its pathway is isoprenoid biosynthesis; isopentenyl diphosphate biosynthesis via DXP pathway; isopentenyl diphosphate from 1-deoxy-D-xylulose 5-phosphate: step 2/6. It functions in the pathway isoprenoid biosynthesis; isopentenyl diphosphate biosynthesis via DXP pathway; isopentenyl diphosphate from 1-deoxy-D-xylulose 5-phosphate: step 4/6. Functionally, bifunctional enzyme that catalyzes the formation of 4-diphosphocytidyl-2-C-methyl-D-erythritol from CTP and 2-C-methyl-D-erythritol 4-phosphate (MEP) (IspD), and catalyzes the conversion of 4-diphosphocytidyl-2-C-methyl-D-erythritol 2-phosphate (CDP-ME2P) to 2-C-methyl-D-erythritol 2,4-cyclodiphosphate (ME-CPP) with a corresponding release of cytidine 5-monophosphate (CMP) (IspF). The polypeptide is Bifunctional enzyme IspD/IspF (Paramagnetospirillum magneticum (strain ATCC 700264 / AMB-1) (Magnetospirillum magneticum)).